Consider the following 241-residue polypeptide: 1-(5-phosphoribosyl)-5-[(5-phosphoribosylamino)methylideneamino] imidazole-4-carboxamide isomerase (241 aa).

Catalysis depends on D8, which acts as the Proton acceptor. The active-site Proton donor is D130.

The protein belongs to the HisA/HisF family.

Its subcellular location is the cytoplasm. It carries out the reaction 1-(5-phospho-beta-D-ribosyl)-5-[(5-phospho-beta-D-ribosylamino)methylideneamino]imidazole-4-carboxamide = 5-[(5-phospho-1-deoxy-D-ribulos-1-ylimino)methylamino]-1-(5-phospho-beta-D-ribosyl)imidazole-4-carboxamide. Its pathway is amino-acid biosynthesis; L-histidine biosynthesis; L-histidine from 5-phospho-alpha-D-ribose 1-diphosphate: step 4/9. The sequence is that of 1-(5-phosphoribosyl)-5-[(5-phosphoribosylamino)methylideneamino] imidazole-4-carboxamide isomerase from Leptospira borgpetersenii serovar Hardjo-bovis (strain L550).